The sequence spans 366 residues: PTI1-like tyrosine-protein kinase 2 (366 aa).

Residues 8–23 are compositionally biased toward basic and acidic residues; sequence GDKKGDSDLSNEEVHL. Residues 8 to 50 are disordered; that stretch reads GDKKGDSDLSNEEVHLKSPWQNSEANQKNQKPQAVVKPEAQKE. Polar residues predominate over residues 26–39; the sequence is PWQNSEANQKNQKP. Residues 71-353 enclose the Protein kinase domain; sequence FGSKSLIGEG…IVVKALQPLL (283 aa). Residues 77 to 85 and Lys99 each bind ATP; that span reads IGEGSYGRV. The Proton acceptor role is filled by Asp203.

The protein belongs to the protein kinase superfamily. Tyr protein kinase family. Interacts with OXI1. In terms of processing, autophosphorylated and phosphorylated by OXI1.

The enzyme catalyses L-tyrosyl-[protein] + ATP = O-phospho-L-tyrosyl-[protein] + ADP + H(+). With respect to regulation, strongly activated in response to phosphatidic acid (PA) and xylanase in a OXI1- and PDK1-dependent manner, and, to a lesser extent, by hydrogen peroxide and flagellin in a OXI1-dependent manner. Its function is as follows. Probable tyrosine-protein kinase involved in oxidative burst-mediated signaling leading to specific genes expression. In Arabidopsis thaliana (Mouse-ear cress), this protein is PTI1-like tyrosine-protein kinase 2 (PTI12).